We begin with the raw amino-acid sequence, 217 residues long: Chorionic somatomammotropin hormone 1 (217 aa).

Residues Met1 to Ala26 form the signal peptide. His44 is a Zn(2+) binding site. A disulfide bond links Cys79 and Cys191. Position 200 (Glu200) interacts with Zn(2+). The cysteines at positions 208 and 215 are disulfide-linked.

The protein belongs to the somatotropin/prolactin family. In terms of assembly, can be found in a monomeric as well as dimeric form.

The protein localises to the secreted. In terms of biological role, produced only during pregnancy and is involved in stimulating lactation, fetal growth and metabolism. Does not interact with GHR but only activates PRLR through zinc-induced dimerization. This Homo sapiens (Human) protein is Chorionic somatomammotropin hormone 1 (CSH1).